We begin with the raw amino-acid sequence, 213 residues long: ATP phosphoribosyltransferase (213 aa).

It belongs to the ATP phosphoribosyltransferase family. Short subfamily. In terms of assembly, heteromultimer composed of HisG and HisZ subunits.

Its subcellular location is the cytoplasm. It carries out the reaction 1-(5-phospho-beta-D-ribosyl)-ATP + diphosphate = 5-phospho-alpha-D-ribose 1-diphosphate + ATP. Its pathway is amino-acid biosynthesis; L-histidine biosynthesis; L-histidine from 5-phospho-alpha-D-ribose 1-diphosphate: step 1/9. Its function is as follows. Catalyzes the condensation of ATP and 5-phosphoribose 1-diphosphate to form N'-(5'-phosphoribosyl)-ATP (PR-ATP). Has a crucial role in the pathway because the rate of histidine biosynthesis seems to be controlled primarily by regulation of HisG enzymatic activity. The chain is ATP phosphoribosyltransferase from Synechococcus sp. (strain RCC307).